Here is a 150-residue protein sequence, read N- to C-terminus: MRVWIDADACPKAARDLIVKFALKRKFEVVMVAGQAVAKPAFAIVRLIVVPSGMDAADDYLVEHAVPGELVICSDVPLADRLVKKGVAALDPRGREFDERNMGDRLAARNLFTELREQGQVGGGQGAYGEREKQAFANALDRIIARLSKS.

It belongs to the UPF0178 family.

This is UPF0178 protein PputGB1_5282 from Pseudomonas putida (strain GB-1).